Consider the following 428-residue polypeptide: Homocitrate synthase, cytosolic isozyme (428 aa).

The Pyruvate carboxyltransferase domain maps to 23–276; sequence FQLIDSTLRE…KSKYKLHKIR (254 aa). Residue R31 coordinates 2-oxoglutarate. Residue E32 participates in Mg(2+) binding. 2-oxoglutarate-binding residues include H91, R151, and T185. Mg(2+) contacts are provided by H212 and H214. H309 (proton acceptor) is an active-site residue. S385 is modified (phosphoserine). At T396 the chain carries Phosphothreonine. A disordered region spans residues 399–428; it reads VLSAKKNKKNDSDVPELATIPAAKRTKPSA. Residues S401 and S410 each carry the phosphoserine modification.

It belongs to the alpha-IPM synthase/homocitrate synthase family. Homocitrate synthase LYS20/LYS21 subfamily. It depends on Mg(2+) as a cofactor. The cofactor is Mn(2+).

It is found in the cytoplasm. It catalyses the reaction acetyl-CoA + 2-oxoglutarate + H2O = (2R)-homocitrate + CoA + H(+). Its pathway is amino-acid biosynthesis; L-lysine biosynthesis via AAA pathway; L-alpha-aminoadipate from 2-oxoglutarate: step 1/5. Its function is as follows. Catalyzes the aldol-type condensation of 2-oxoglutarate with acetyl-CoA to yield homocitrate. Carries out the first step of the alpha-aminoadipate (AAA) lysine biosynthesis pathway. In Saccharomyces cerevisiae (strain ATCC 204508 / S288c) (Baker's yeast), this protein is Homocitrate synthase, cytosolic isozyme (LYS20).